A 422-amino-acid polypeptide reads, in one-letter code: Cytochrome P450-pinF1, plant-inducible (422 aa).

Cys369 is a heme binding site.

The protein belongs to the cytochrome P450 family. It depends on heme as a cofactor.

Not essential for virulence, but may be involved in the detoxification of plant protective agents at the site of wounding. This is Cytochrome P450-pinF1, plant-inducible (cyp103) from Rhizobium radiobacter (Agrobacterium tumefaciens).